Consider the following 224-residue polypeptide: Germin-like protein 8-9 (224 aa).

The N-terminal stretch at 1–22 (MASPSFCLFAALLALVSWQAIA) is a signal peptide. A disulfide bridge connects residues Cys-32 and Cys-47. Residues 62–212 (AMLDTPRKTN…AFQVGKGTID (151 aa)) enclose the Cupin type-1 domain. A glycan (N-linked (GlcNAc...) asparagine) is linked at Asn-76. Residues His-109, His-111, and Glu-116 each contribute to the Mn(2+) site. Asn-135 is a glycosylation site (N-linked (GlcNAc...) asparagine). His-157 serves as a coordination point for Mn(2+).

The protein belongs to the germin family. Oligomer (believed to be a pentamer but probably hexamer).

Its subcellular location is the secreted. It localises to the extracellular space. The protein localises to the apoplast. Its function is as follows. Plays a role in broad-spectrum disease resistance. Probably has no oxalate oxidase activity even if the active site is conserved. The sequence is that of Germin-like protein 8-9 from Oryza sativa subsp. japonica (Rice).